The following is a 310-amino-acid chain: MIQSTMGHKQSVDSRGKGRKVPGSSSMVQKHRVESSGGAIISGPSLFDNLPEDCISNIISFTSPRDACVAASVSKTFESAVNSDSVWDKFLPSDYSSLVPPSRVFSSKKELYFAICDNPVLVEDGGKSFWLEKENGKKCFMLSPKKSMWITWVSTPQYWRWISIPEARFEEVPELLNVCWFEVRGGMNTKELSPGTRYSAYIVFKTKNGCPNLGDVPVEATVGLVGQESSQRHIYFVGPSDQRRDRETRDVTRPTKRKDGWMEAELGQFFNESGCDVVDTSILEIKTPYWKRGLIIQGIEFRPTKSLFYI.

Residues 1–34 (MIQSTMGHKQSVDSRGKGRKVPGSSSMVQKHRVE) are disordered. The F-box domain occupies 44 to 90 (PSLFDNLPEDCISNIISFTSPRDACVAASVSKTFESAVNSDSVWDKF).

In Arabidopsis thaliana (Mouse-ear cress), this protein is Putative F-box protein PP2-B2 (PP2B2).